Reading from the N-terminus, the 294-residue chain is Glutamyl-Q tRNA(Asp) synthetase (294 aa).

L-glutamate is bound by residues 8-12 and glutamate 44; that span reads RFAPT. The short motif at 11–21 is the 'HIGH' region element; sequence PTPSGYLHFGS. Residues cysteine 100, cysteine 102, tyrosine 114, and cysteine 118 each contribute to the Zn(2+) site. The L-glutamate site is built by tyrosine 171 and arginine 189. The 'KMSKS' region signature appears at 227–231; the sequence is KLGKS. ATP is bound at residue lysine 230.

This sequence belongs to the class-I aminoacyl-tRNA synthetase family. GluQ subfamily. Zn(2+) is required as a cofactor.

In terms of biological role, catalyzes the tRNA-independent activation of glutamate in presence of ATP and the subsequent transfer of glutamate onto a tRNA(Asp). Glutamate is transferred on the 2-amino-5-(4,5-dihydroxy-2-cyclopenten-1-yl) moiety of the queuosine in the wobble position of the QUC anticodon. The polypeptide is Glutamyl-Q tRNA(Asp) synthetase (Ectopseudomonas mendocina (strain ymp) (Pseudomonas mendocina)).